Reading from the N-terminus, the 426-residue chain is MSKSENLYSAARELIPGGVNSPVRAFTGVGGTPLFIEKADGAYLYDVDGKAYIDYVGSWGPMVLGHNHPAIRNAVIEAAERGLSFGAPTEMEVKMAELVTNLVPTMDMVRMVNSGTEATMSAIRLARGFTGRDKIIKFEGCYHGHADCLLVKAGSGALTLGQPNSPGVPADFAKHTLTCTYNDLTSVRAAFEQYPQEIASIIVEPVAGNMNCVPPLPEFLPGLRALCDEFGALLIIDEVMTGFRVALAGAQDYYGVVPDLTCLGKIIGGGMPVGAFGGRRDVMDALAPTGPVYQAGTLSGNPIAMAAGFACLNEVAQPGIHETLDELTTRLAEGLCEAAQEAGIPLVVNHVGGMFGIFFTDAESVTCYQDVMACDVERFKRFFHLMLEEGVYLAPSAFEAGFMSVAHSMDDINNTIDAARRVFAKL.

N6-(pyridoxal phosphate)lysine is present on lysine 265.

It belongs to the class-III pyridoxal-phosphate-dependent aminotransferase family. HemL subfamily. As to quaternary structure, homodimer. Pyridoxal 5'-phosphate is required as a cofactor.

It is found in the cytoplasm. The catalysed reaction is (S)-4-amino-5-oxopentanoate = 5-aminolevulinate. It functions in the pathway porphyrin-containing compound metabolism; protoporphyrin-IX biosynthesis; 5-aminolevulinate from L-glutamyl-tRNA(Glu): step 2/2. This Salmonella typhimurium (strain SL1344) protein is Glutamate-1-semialdehyde 2,1-aminomutase (hemL).